A 156-amino-acid chain; its full sequence is MKVLEGGLAAPNAKVAVVVARFNSFINDSLVEGAVDALKRIGQVKDENITLVRVPGAYELPLAVRRLADSKKYDAIVALGTVIRGGTAHFEYVAGGASNGIGHVSLESNVPVAFGVLTTENIEQAIDRAGTKSGNKGAEAALVALEMVNLLAQINA.

Residues F22, 57 to 59 (AYE), and 81 to 83 (TVI) each bind 5-amino-6-(D-ribitylamino)uracil. 86-87 (GT) is a binding site for (2S)-2-hydroxy-3-oxobutyl phosphate. H89 functions as the Proton donor in the catalytic mechanism. Residue F114 coordinates 5-amino-6-(D-ribitylamino)uracil. R128 contributes to the (2S)-2-hydroxy-3-oxobutyl phosphate binding site.

It belongs to the DMRL synthase family. In terms of assembly, forms an icosahedral capsid composed of 60 subunits, arranged as a dodecamer of pentamers.

It carries out the reaction (2S)-2-hydroxy-3-oxobutyl phosphate + 5-amino-6-(D-ribitylamino)uracil = 6,7-dimethyl-8-(1-D-ribityl)lumazine + phosphate + 2 H2O + H(+). It participates in cofactor biosynthesis; riboflavin biosynthesis; riboflavin from 2-hydroxy-3-oxobutyl phosphate and 5-amino-6-(D-ribitylamino)uracil: step 1/2. Functionally, catalyzes the formation of 6,7-dimethyl-8-ribityllumazine by condensation of 5-amino-6-(D-ribitylamino)uracil with 3,4-dihydroxy-2-butanone 4-phosphate. This is the penultimate step in the biosynthesis of riboflavin. This Mannheimia succiniciproducens (strain KCTC 0769BP / MBEL55E) protein is 6,7-dimethyl-8-ribityllumazine synthase.